A 554-amino-acid chain; its full sequence is Dihydroxy-acid dehydratase (554 aa).

A Mg(2+)-binding site is contributed by D78. Position 119 (C119) interacts with [2Fe-2S] cluster. The Mg(2+) site is built by D120 and K121. At K121 the chain carries N6-carboxylysine. C192 lines the [2Fe-2S] cluster pocket. E443 serves as a coordination point for Mg(2+). S469 acts as the Proton acceptor in catalysis.

This sequence belongs to the IlvD/Edd family. Homodimer. Requires [2Fe-2S] cluster as cofactor. Mg(2+) serves as cofactor.

The catalysed reaction is (2R)-2,3-dihydroxy-3-methylbutanoate = 3-methyl-2-oxobutanoate + H2O. It catalyses the reaction (2R,3R)-2,3-dihydroxy-3-methylpentanoate = (S)-3-methyl-2-oxopentanoate + H2O. It functions in the pathway amino-acid biosynthesis; L-isoleucine biosynthesis; L-isoleucine from 2-oxobutanoate: step 3/4. It participates in amino-acid biosynthesis; L-valine biosynthesis; L-valine from pyruvate: step 3/4. Functionally, functions in the biosynthesis of branched-chain amino acids. Catalyzes the dehydration of (2R,3R)-2,3-dihydroxy-3-methylpentanoate (2,3-dihydroxy-3-methylvalerate) into 2-oxo-3-methylpentanoate (2-oxo-3-methylvalerate) and of (2R)-2,3-dihydroxy-3-methylbutanoate (2,3-dihydroxyisovalerate) into 2-oxo-3-methylbutanoate (2-oxoisovalerate), the penultimate precursor to L-isoleucine and L-valine, respectively. The protein is Dihydroxy-acid dehydratase of Shouchella clausii (strain KSM-K16) (Alkalihalobacillus clausii).